Consider the following 37-residue polypeptide: Protease 2 large chain (37 aa).

Basic and acidic residues predominate over residues 1–14; it reads NDGNGRDSDPHDPG. Residues 1–37 form a disordered region; the sequence is NDGNGRDSDPHDPGDWTTAGQCGLWQPARNSQHWTLV. A compositionally biased stretch (polar residues) spans 28–37; that stretch reads ARNSQHWTLV.

Belongs to the peptidase S8 family. As to quaternary structure, heterodimer of a large and a small chain.

Its subcellular location is the secreted. The sequence is that of Protease 2 large chain from Achromobacter lyticus.